Consider the following 120-residue polypeptide: NAD(P)H-quinone oxidoreductase subunit 3, chloroplastic (120 aa).

Transmembrane regions (helical) follow at residues isoleucine 9–glycine 29, methionine 64–methionine 84, and valine 88–leucine 108.

The protein belongs to the complex I subunit 3 family. In terms of assembly, NDH is composed of at least 16 different subunits, 5 of which are encoded in the nucleus.

The protein resides in the plastid. It is found in the chloroplast thylakoid membrane. The catalysed reaction is a plastoquinone + NADH + (n+1) H(+)(in) = a plastoquinol + NAD(+) + n H(+)(out). It catalyses the reaction a plastoquinone + NADPH + (n+1) H(+)(in) = a plastoquinol + NADP(+) + n H(+)(out). NDH shuttles electrons from NAD(P)H:plastoquinone, via FMN and iron-sulfur (Fe-S) centers, to quinones in the photosynthetic chain and possibly in a chloroplast respiratory chain. The immediate electron acceptor for the enzyme in this species is believed to be plastoquinone. Couples the redox reaction to proton translocation, and thus conserves the redox energy in a proton gradient. This chain is NAD(P)H-quinone oxidoreductase subunit 3, chloroplastic, found in Hordeum vulgare (Barley).